The chain runs to 34 residues: Photosystem II reaction center protein M (34 aa).

A helical membrane pass occupies residues Ile5–Leu25.

It belongs to the PsbM family. In terms of assembly, PSII is composed of 1 copy each of membrane proteins PsbA, PsbB, PsbC, PsbD, PsbE, PsbF, PsbH, PsbI, PsbJ, PsbK, PsbL, PsbM, PsbT, PsbX, PsbY, PsbZ, Psb30/Ycf12, at least 3 peripheral proteins of the oxygen-evolving complex and a large number of cofactors. It forms dimeric complexes.

It localises to the plastid. The protein resides in the chloroplast thylakoid membrane. One of the components of the core complex of photosystem II (PSII). PSII is a light-driven water:plastoquinone oxidoreductase that uses light energy to abstract electrons from H(2)O, generating O(2) and a proton gradient subsequently used for ATP formation. It consists of a core antenna complex that captures photons, and an electron transfer chain that converts photonic excitation into a charge separation. This subunit is found at the monomer-monomer interface. The chain is Photosystem II reaction center protein M from Pleurastrum terricola (Filamentous green alga).